A 126-amino-acid polypeptide reads, in one-letter code: Fluoride-specific ion channel FluC (126 aa).

A run of 4 helical transmembrane segments spans residues 3 to 23, 35 to 55, 68 to 88, and 103 to 123; these read LSIL…WFLG, LGTL…VAYF, FIIT…AEVV, and IAIH…TVAV. Positions 75 and 78 each coordinate Na(+).

The protein belongs to the fluoride channel Fluc/FEX (TC 1.A.43) family.

The protein localises to the cell inner membrane. The catalysed reaction is fluoride(in) = fluoride(out). Its activity is regulated as follows. Na(+) is not transported, but it plays an essential structural role and its presence is essential for fluoride channel function. Its function is as follows. Fluoride-specific ion channel. Important for reducing fluoride concentration in the cell, thus reducing its toxicity. The protein is Fluoride-specific ion channel FluC of Paraburkholderia phymatum (strain DSM 17167 / CIP 108236 / LMG 21445 / STM815) (Burkholderia phymatum).